The sequence spans 239 residues: tRNA (guanine-N(7)-)-methyltransferase (239 aa).

S-adenosyl-L-methionine is bound by residues Glu-69, Glu-94, Asp-121, and Asp-144. The active site involves Asp-144. A substrate-binding site is contributed by Lys-148. The interaction with RNA stretch occupies residues 150–155 (RHNKRR). Residues Asp-180 and 217–220 (TKFE) contribute to the substrate site.

This sequence belongs to the class I-like SAM-binding methyltransferase superfamily. TrmB family. Monomer.

It catalyses the reaction guanosine(46) in tRNA + S-adenosyl-L-methionine = N(7)-methylguanosine(46) in tRNA + S-adenosyl-L-homocysteine. It participates in tRNA modification; N(7)-methylguanine-tRNA biosynthesis. Catalyzes the formation of N(7)-methylguanine at position 46 (m7G46) in tRNA. The chain is tRNA (guanine-N(7)-)-methyltransferase from Escherichia coli O6:H1 (strain CFT073 / ATCC 700928 / UPEC).